We begin with the raw amino-acid sequence, 110 residues long: U1-lycotoxin-Ls1kk (110 aa).

Residues 1-20 (MKFVLLFGVFLVTLFSYSSA) form the signal peptide. A propeptide spanning residues 21–44 (EMLDDFDQADEDELLSLIEKEEAR) is cleaved from the precursor. Cystine bridges form between Cys-47-Cys-62, Cys-54-Cys-71, Cys-61-Cys-89, and Cys-73-Cys-87.

The protein belongs to the neurotoxin 19 (CSTX) family. 03 subfamily. Expressed by the venom gland.

The protein localises to the secreted. The sequence is that of U1-lycotoxin-Ls1kk from Lycosa singoriensis (Wolf spider).